We begin with the raw amino-acid sequence, 147 residues long: Large ribosomal subunit protein uL13 (147 aa).

The protein belongs to the universal ribosomal protein uL13 family. In terms of assembly, part of the 50S ribosomal subunit.

This protein is one of the early assembly proteins of the 50S ribosomal subunit, although it is not seen to bind rRNA by itself. It is important during the early stages of 50S assembly. In Arthrobacter sp. (strain FB24), this protein is Large ribosomal subunit protein uL13.